The chain runs to 321 residues: Phospho-N-acetylmuramoyl-pentapeptide-transferase (321 aa).

10 helical membrane-spanning segments follow: residues 6–26, 53–73, 77–97, 121–141, 144–164, 175–195, 200–220, 226–246, 251–271, and 301–321; these read MLIP…LFIG, TMGG…VGIW, LTLS…LGFY, ILGA…HTLW, IIGN…WLVG, LDGL…IIAA, TDVL…LMFN, IFMG…VAIL, WSLL…ILQV, and IDLT…AFFL.

It belongs to the glycosyltransferase 4 family. MraY subfamily. Requires Mg(2+) as cofactor.

It localises to the cell membrane. It catalyses the reaction UDP-N-acetyl-alpha-D-muramoyl-L-alanyl-gamma-D-glutamyl-L-lysyl-D-alanyl-D-alanine + di-trans,octa-cis-undecaprenyl phosphate = Mur2Ac(oyl-L-Ala-gamma-D-Glu-L-Lys-D-Ala-D-Ala)-di-trans,octa-cis-undecaprenyl diphosphate + UMP. The protein operates within cell wall biogenesis; peptidoglycan biosynthesis. Functionally, catalyzes the initial step of the lipid cycle reactions in the biosynthesis of the cell wall peptidoglycan: transfers peptidoglycan precursor phospho-MurNAc-pentapeptide from UDP-MurNAc-pentapeptide onto the lipid carrier undecaprenyl phosphate, yielding undecaprenyl-pyrophosphoryl-MurNAc-pentapeptide, known as lipid I. This chain is Phospho-N-acetylmuramoyl-pentapeptide-transferase, found in Lacticaseibacillus paracasei (strain ATCC 334 / BCRC 17002 / CCUG 31169 / CIP 107868 / KCTC 3260 / NRRL B-441) (Lactobacillus paracasei).